The following is an 89-amino-acid chain: Small ribosomal subunit protein uS15 (89 aa).

The protein belongs to the universal ribosomal protein uS15 family. In terms of assembly, part of the 30S ribosomal subunit. Forms a bridge to the 50S subunit in the 70S ribosome, contacting the 23S rRNA.

Functionally, one of the primary rRNA binding proteins, it binds directly to 16S rRNA where it helps nucleate assembly of the platform of the 30S subunit by binding and bridging several RNA helices of the 16S rRNA. Its function is as follows. Forms an intersubunit bridge (bridge B4) with the 23S rRNA of the 50S subunit in the ribosome. This Desulfotalea psychrophila (strain LSv54 / DSM 12343) protein is Small ribosomal subunit protein uS15.